The primary structure comprises 275 residues: Formamidopyrimidine-DNA glycosylase (275 aa).

The Schiff-base intermediate with DNA role is filled by Pro-2. The active-site Proton donor is Glu-3. The active-site Proton donor; for beta-elimination activity is the Lys-59. His-93, Arg-112, and Arg-153 together coordinate DNA. The FPG-type zinc finger occupies Asn-238–Val-272. Catalysis depends on Arg-262, which acts as the Proton donor; for delta-elimination activity.

This sequence belongs to the FPG family. In terms of assembly, monomer. Zn(2+) is required as a cofactor.

It catalyses the reaction Hydrolysis of DNA containing ring-opened 7-methylguanine residues, releasing 2,6-diamino-4-hydroxy-5-(N-methyl)formamidopyrimidine.. It carries out the reaction 2'-deoxyribonucleotide-(2'-deoxyribose 5'-phosphate)-2'-deoxyribonucleotide-DNA = a 3'-end 2'-deoxyribonucleotide-(2,3-dehydro-2,3-deoxyribose 5'-phosphate)-DNA + a 5'-end 5'-phospho-2'-deoxyribonucleoside-DNA + H(+). In terms of biological role, involved in base excision repair of DNA damaged by oxidation or by mutagenic agents. Acts as a DNA glycosylase that recognizes and removes damaged bases. Has a preference for oxidized purines, such as 7,8-dihydro-8-oxoguanine (8-oxoG). Has AP (apurinic/apyrimidinic) lyase activity and introduces nicks in the DNA strand. Cleaves the DNA backbone by beta-delta elimination to generate a single-strand break at the site of the removed base with both 3'- and 5'-phosphates. This Chloroflexus aggregans (strain MD-66 / DSM 9485) protein is Formamidopyrimidine-DNA glycosylase.